Consider the following 101-residue polypeptide: Small ribosomal subunit protein uS14 (101 aa).

Belongs to the universal ribosomal protein uS14 family. As to quaternary structure, part of the 30S ribosomal subunit. Contacts proteins S3 and S10.

Its function is as follows. Binds 16S rRNA, required for the assembly of 30S particles and may also be responsible for determining the conformation of the 16S rRNA at the A site. The polypeptide is Small ribosomal subunit protein uS14 (Bordetella parapertussis (strain 12822 / ATCC BAA-587 / NCTC 13253)).